We begin with the raw amino-acid sequence, 509 residues long: 3-isopropylmalate dehydratase large subunit, chloroplastic (509 aa).

The span at 1 to 24 (MASVISSSPFLCKSSSKSDLGISS) shows a compositional bias: low complexity. Positions 1-25 (MASVISSSPFLCKSSSKSDLGISSF) are disordered. Residues 1-47 (MASVISSSPFLCKSSSKSDLGISSFPKSSQISIHRCQKKSISRKIVS) constitute a chloroplast transit peptide. 3 residues coordinate [4Fe-4S] cluster: Cys-376, Cys-445, and Cys-448.

This sequence belongs to the aconitase/IPM isomerase family. In terms of assembly, heterodimer of the large LEUC/IIL1 subunit and the small LEUD (SSU1, SSU2 or SSU3) subunits. Requires [4Fe-4S] cluster as cofactor. In terms of tissue distribution, expressed in roots, leaves, stems and flowers. Expressed at low levels in siliques.

It localises to the plastid. Its subcellular location is the chloroplast stroma. The catalysed reaction is (2R,3S)-3-isopropylmalate = (2S)-2-isopropylmalate. It carries out the reaction a 2-(omega-methylsulfanyl)alkylmalate = a 2-(omega-methylsulfanyl)alkylmaleate + H2O. The enzyme catalyses 2-(3-methylsulfanyl)propylmalate = 2-(2-methylsulfanyl)propylmaleate + H2O. It catalyses the reaction a 3-(omega-methylsulfanyl)alkylmalate = a 2-(omega-methylsulfanyl)alkylmaleate + H2O. The catalysed reaction is 2-(2-methylsulfanyl)ethylmalate = 2-(2-methylsulfanyl)ethylmaleate + H2O. It carries out the reaction 3-(2-methylsulfanyl)ethylmalate = 2-(2-methylsulfanyl)ethylmaleate + H2O. The enzyme catalyses 3-(3-methylsulfanyl)propylmalate = 2-(2-methylsulfanyl)propylmaleate + H2O. The protein operates within amino-acid biosynthesis; L-leucine biosynthesis; L-leucine from 3-methyl-2-oxobutanoate: step 2/4. In terms of biological role, catalyzes the isomerization between 2-isopropylmalate and 3-isopropylmalate, via the formation of 2-isopropylmaleate. Functions in both the biosynthesis of leucine and in the methionine chain elongation pathway of aliphatic glucosinolate formation. This Arabidopsis thaliana (Mouse-ear cress) protein is 3-isopropylmalate dehydratase large subunit, chloroplastic.